A 363-amino-acid polypeptide reads, in one-letter code: Pyrimidine monooxygenase RutA (363 aa).

Residues 49-50 (IK), asparagine 115, glutamate 124, 140-141 (RY), and serine 190 each bind FMN.

The protein belongs to the NtaA/SnaA/DszA monooxygenase family. RutA subfamily.

It catalyses the reaction uracil + FMNH2 + NADH + O2 = (Z)-3-ureidoacrylate + FMN + NAD(+) + H2O + H(+). It carries out the reaction thymine + FMNH2 + NADH + O2 = (Z)-2-methylureidoacrylate + FMN + NAD(+) + H2O + H(+). Its function is as follows. Catalyzes the pyrimidine ring opening between N-3 and C-4 by an unusual flavin hydroperoxide-catalyzed mechanism, adding oxygen atoms in the process to yield ureidoacrylate peracid, that immediately reacts with FMN forming ureidoacrylate and FMN-N(5)-oxide. The FMN-N(5)-oxide reacts spontaneously with NADH to produce FMN. Requires the flavin reductase RutF to regenerate FMN in vivo. This is Pyrimidine monooxygenase RutA from Escherichia coli O103:H2 (strain 12009 / EHEC).